The primary structure comprises 370 residues: Queuine tRNA-ribosyltransferase (370 aa).

The Proton acceptor role is filled by Asp-89. Residues 89–93 (DSGGF), Asp-143, and Gly-214 each bind substrate. Residues 245–251 (GVGKPED) form an RNA binding region. The Nucleophile role is filled by Asp-264. An RNA binding; important for wobble base 34 recognition region spans residues 269 to 273 (TRNAR). Zn(2+) contacts are provided by Cys-302, Cys-304, Cys-307, and His-333.

It belongs to the queuine tRNA-ribosyltransferase family. In terms of assembly, homodimer. Within each dimer, one monomer is responsible for RNA recognition and catalysis, while the other monomer binds to the replacement base PreQ1. It depends on Zn(2+) as a cofactor.

It catalyses the reaction 7-aminomethyl-7-carbaguanine + guanosine(34) in tRNA = 7-aminomethyl-7-carbaguanosine(34) in tRNA + guanine. Its pathway is tRNA modification; tRNA-queuosine biosynthesis. In terms of biological role, catalyzes the base-exchange of a guanine (G) residue with the queuine precursor 7-aminomethyl-7-deazaguanine (PreQ1) at position 34 (anticodon wobble position) in tRNAs with GU(N) anticodons (tRNA-Asp, -Asn, -His and -Tyr). Catalysis occurs through a double-displacement mechanism. The nucleophile active site attacks the C1' of nucleotide 34 to detach the guanine base from the RNA, forming a covalent enzyme-RNA intermediate. The proton acceptor active site deprotonates the incoming PreQ1, allowing a nucleophilic attack on the C1' of the ribose to form the product. After dissociation, two additional enzymatic reactions on the tRNA convert PreQ1 to queuine (Q), resulting in the hypermodified nucleoside queuosine (7-(((4,5-cis-dihydroxy-2-cyclopenten-1-yl)amino)methyl)-7-deazaguanosine). This Buchnera aphidicola subsp. Acyrthosiphon pisum (strain 5A) protein is Queuine tRNA-ribosyltransferase.